The sequence spans 500 residues: L-arabinose isomerase (500 aa).

Mn(2+)-binding residues include Glu-306, Glu-331, His-348, and His-447.

This sequence belongs to the arabinose isomerase family. It depends on Mn(2+) as a cofactor.

It catalyses the reaction beta-L-arabinopyranose = L-ribulose. It functions in the pathway carbohydrate degradation; L-arabinose degradation via L-ribulose; D-xylulose 5-phosphate from L-arabinose (bacterial route): step 1/3. In terms of biological role, catalyzes the conversion of L-arabinose to L-ribulose. In Anoxybacillus flavithermus (strain DSM 21510 / WK1), this protein is L-arabinose isomerase.